Consider the following 357-residue polypeptide: Dihydroorotate dehydrogenase (quinone) (357 aa).

FMN is bound by residues 67–71 (AGFDK) and Thr-91. Lys-71 is a substrate binding site. Residue 116 to 120 (NRMGF) coordinates substrate. Residues Asn-153 and Asn-186 each coordinate FMN. Asn-186 is a binding site for substrate. Residue Ser-189 is the Nucleophile of the active site. A substrate-binding site is contributed by Asn-191. FMN contacts are provided by Lys-228 and Thr-256. 257–258 (NT) contacts substrate. Residues Gly-282, Gly-311, and 332–333 (YT) each bind FMN.

Belongs to the dihydroorotate dehydrogenase family. Type 2 subfamily. In terms of assembly, monomer. Requires FMN as cofactor.

The protein localises to the cell membrane. It carries out the reaction (S)-dihydroorotate + a quinone = orotate + a quinol. It functions in the pathway pyrimidine metabolism; UMP biosynthesis via de novo pathway; orotate from (S)-dihydroorotate (quinone route): step 1/1. Its function is as follows. Catalyzes the conversion of dihydroorotate to orotate with quinone as electron acceptor. This chain is Dihydroorotate dehydrogenase (quinone), found in Arthrobacter sp. (strain FB24).